Here is a 104-residue protein sequence, read N- to C-terminus: Large ribosomal subunit protein bL21 (104 aa).

This sequence belongs to the bacterial ribosomal protein bL21 family. As to quaternary structure, part of the 50S ribosomal subunit. Contacts protein L20.

Its function is as follows. This protein binds to 23S rRNA in the presence of protein L20. The protein is Large ribosomal subunit protein bL21 of Streptococcus pneumoniae serotype 2 (strain D39 / NCTC 7466).